The sequence spans 341 residues: uncharacterized protein (341 aa).

The tract at residues 125–146 (DTVKHNGSGPRPEQASSHVHYS) is disordered.

It belongs to the cycloisomerase 2 family.

This is an uncharacterized protein from Lactococcus lactis subsp. cremoris (strain MG1363).